A 401-amino-acid chain; its full sequence is tRNA(Met) cytidine acetate ligase (401 aa).

ATP is bound by residues 7 to 20, G102, N164, and R189; that span reads IVEY…HLYH.

Belongs to the TmcAL family.

It is found in the cytoplasm. It catalyses the reaction cytidine(34) in elongator tRNA(Met) + acetate + ATP = N(4)-acetylcytidine(34) in elongator tRNA(Met) + AMP + diphosphate. Catalyzes the formation of N(4)-acetylcytidine (ac(4)C) at the wobble position of elongator tRNA(Met), using acetate and ATP as substrates. First activates an acetate ion to form acetyladenylate (Ac-AMP) and then transfers the acetyl group to tRNA to form ac(4)C34. This Caldanaerobacter subterraneus subsp. tengcongensis (strain DSM 15242 / JCM 11007 / NBRC 100824 / MB4) (Thermoanaerobacter tengcongensis) protein is tRNA(Met) cytidine acetate ligase.